A 37-amino-acid chain; its full sequence is Photosystem I reaction center subunit VIII (37 aa).

Residues 7–27 form a helical membrane-spanning segment; it reads LPAIFVPLVGLVFPAIAMVSL.

It belongs to the PsaI family.

It is found in the plastid. It localises to the chloroplast thylakoid membrane. In terms of biological role, may help in the organization of the PsaL subunit. The sequence is that of Photosystem I reaction center subunit VIII from Morus indica (Mulberry).